Reading from the N-terminus, the 438-residue chain is Adenylosuccinate synthetase (438 aa).

GTP-binding positions include 13–19 (GDEGKGK) and 41–43 (GHT). The active-site Proton acceptor is Asp14. Mg(2+) is bound by residues Asp14 and Gly41. Residues 14–17 (DEGK), 39–42 (NAGH), Thr130, Arg144, Gln225, Thr240, and Arg310 contribute to the IMP site. The active-site Proton donor is the His42. A substrate-binding site is contributed by 306–312 (ATTGRLR). GTP is bound by residues Arg312, 338–340 (KLD), and 421–423 (STG).

This sequence belongs to the adenylosuccinate synthetase family. In terms of assembly, homodimer. It depends on Mg(2+) as a cofactor.

It localises to the cytoplasm. It carries out the reaction IMP + L-aspartate + GTP = N(6)-(1,2-dicarboxyethyl)-AMP + GDP + phosphate + 2 H(+). Its pathway is purine metabolism; AMP biosynthesis via de novo pathway; AMP from IMP: step 1/2. In terms of biological role, plays an important role in the de novo pathway of purine nucleotide biosynthesis. Catalyzes the first committed step in the biosynthesis of AMP from IMP. The protein is Adenylosuccinate synthetase of Vibrio vulnificus (strain YJ016).